Here is a 198-residue protein sequence, read N- to C-terminus: MENQFQDGKEEVIEAWYMDDSEEDQRLPHHREPKEFIPLSKLSELGILSWRLNADDWENDENLKKIREARGYSYMDICDVCPEKLPNYEAKLKNFFEEHLHTDEEIRYCLEGSGYFDVRDQNDQWIRVAVKKGGMIVLPAGMYHRFTLDSDNYIKAMRLFVGEPVWTPYNRPHDHLPARKEYVEKIINRGGTQAVEAR.

The Fe(2+) site is built by His-99, His-101, Glu-105, and His-144. Residues His-99, His-101, Glu-105, and His-144 each contribute to the Ni(2+) site.

This sequence belongs to the acireductone dioxygenase (ARD) family. Fe(2+) is required as a cofactor. Requires Ni(2+) as cofactor. As to expression, ubiquitous.

It localises to the cytoplasm. It is found in the nucleus. It catalyses the reaction 1,2-dihydroxy-5-(methylsulfanyl)pent-1-en-3-one + O2 = 4-methylsulfanyl-2-oxobutanoate + formate + 2 H(+). The catalysed reaction is 1,2-dihydroxy-5-(methylsulfanyl)pent-1-en-3-one + O2 = 3-(methylsulfanyl)propanoate + CO + formate + 2 H(+). The protein operates within amino-acid biosynthesis; L-methionine biosynthesis via salvage pathway; L-methionine from S-methyl-5-thio-alpha-D-ribose 1-phosphate: step 5/6. Its function is as follows. Catalyzes 2 different reactions between oxygen and the acireductone 1,2-dihydroxy-3-keto-5-methylthiopentene (DHK-MTPene) depending upon the metal bound in the active site. Fe-containing acireductone dioxygenase (Fe-ARD) produces formate and 2-keto-4-methylthiobutyrate (KMTB), the alpha-ketoacid precursor of methionine in the methionine recycle pathway. Ni-containing acireductone dioxygenase (Ni-ARD) produces methylthiopropionate, carbon monoxide and formate, and does not lie on the methionine recycle pathway. The chain is Acireductone dioxygenase 2 (ARD2) from Oryza sativa subsp. indica (Rice).